We begin with the raw amino-acid sequence, 24 residues long: Alpha-lactalbumin (24 aa).

The protein belongs to the glycosyl hydrolase 22 family. As to quaternary structure, lactose synthase (LS) is a heterodimer of a catalytic component, beta1,4-galactosyltransferase (beta4Gal-T1) and a regulatory component, alpha-lactalbumin (LA). In terms of processing, glycosylated (50% of the proteins). Mammary gland specific. Secreted in milk.

The protein localises to the secreted. Regulatory subunit of lactose synthase, changes the substrate specificity of galactosyltransferase in the mammary gland making glucose a good acceptor substrate for this enzyme. This enables LS to synthesize lactose, the major carbohydrate component of milk. In other tissues, galactosyltransferase transfers galactose onto the N-acetylglucosamine of the oligosaccharide chains in glycoproteins. This Felis catus (Cat) protein is Alpha-lactalbumin (LALBA).